Reading from the N-terminus, the 65-residue chain is Beta-defensin 106A (65 aa).

Residues 1 to 20 (MRTFLFLFVVLFFLTPAKNA) form the signal peptide. 3 disulfides stabilise this stretch: Cys26-Cys53, Cys33-Cys47, and Cys37-Cys54.

This sequence belongs to the beta-defensin family. In terms of assembly, monomer. Interacts with CCR2 (via extracellular N-terminal region); this interaction may preferentially require specific tyrosine sulfation on CCR2.

The protein localises to the secreted. Its subcellular location is the membrane. Functionally, has antibacterial activity. Acts as a ligand for C-C chemokine receptor CCR2. In Hylobates lar (Lar gibbon), this protein is Beta-defensin 106A (DEFB106A).